We begin with the raw amino-acid sequence, 304 residues long: UDP-N-acetylenolpyruvoylglucosamine reductase (304 aa).

The 166-residue stretch at 33–198 folds into the FAD-binding PCMH-type domain; it reads RVGGPADILV…IEATIELESG (166 aa). Arg-177 is a catalytic residue. Residue Ser-227 is the Proton donor of the active site. The active site involves Glu-297.

Belongs to the MurB family. The cofactor is FAD.

It is found in the cytoplasm. The catalysed reaction is UDP-N-acetyl-alpha-D-muramate + NADP(+) = UDP-N-acetyl-3-O-(1-carboxyvinyl)-alpha-D-glucosamine + NADPH + H(+). It participates in cell wall biogenesis; peptidoglycan biosynthesis. Cell wall formation. The protein is UDP-N-acetylenolpyruvoylglucosamine reductase of Clostridium perfringens (strain SM101 / Type A).